We begin with the raw amino-acid sequence, 420 residues long: 3-isopropylmalate dehydratase large subunit (420 aa).

Cys300, Cys360, and Cys363 together coordinate [4Fe-4S] cluster.

Belongs to the aconitase/IPM isomerase family. LeuC type 2 subfamily. In terms of assembly, heterodimer of LeuC and LeuD. [4Fe-4S] cluster is required as a cofactor.

It catalyses the reaction (2R,3S)-3-isopropylmalate = (2S)-2-isopropylmalate. The protein operates within amino-acid biosynthesis; L-leucine biosynthesis; L-leucine from 3-methyl-2-oxobutanoate: step 2/4. Catalyzes the isomerization between 2-isopropylmalate and 3-isopropylmalate, via the formation of 2-isopropylmaleate. The protein is 3-isopropylmalate dehydratase large subunit of Clostridium kluyveri (strain ATCC 8527 / DSM 555 / NBRC 12016 / NCIMB 10680 / K1).